Here is a 430-residue protein sequence, read N- to C-terminus: Type 3 secretion system ATPase (430 aa).

162 to 167 (GCGKTF) provides a ligand contact to ATP.

Belongs to the ATPase alpha/beta chains family. T3SS ATPase subfamily. The core secretion machinery of the T3SS is composed of approximately 20 different proteins, including cytoplasmic components, a base, an export apparatus and a needle. This subunit is part of the cytosolic complex. Forms homohexamers. Interacts directly with MxiN/SctL (stator protein) and Spa13/SctO (stalk protein). Can form a soluble complex with Spa33/SctQ, MxiN/SctL and MxiK/SctK.

The protein resides in the cytoplasm. It carries out the reaction ATP + H2O + cellular proteinSide 1 = ADP + phosphate + cellular proteinSide 2.. Its activity is regulated as follows. Oligomerization increases ATPase activity. Monomeric forms exhibit low-level ATPase activity by forming short-lived oligomers with active site contributions from at least two protomers. In contrast, oligomers exhibit enhanced ATP hydrolysis rates that likely result from multiple preformed active sites within the oligomeric complex. Oligomerization is important for both enzyme activation and T3SS function. Activity is regulated by MxiN/SctL, which differentially regulates the activity of the monomer and the oligomer: it up-regulates the ATPase activity of the monomer, while it down-regulates the activity of the oligomer. Functionally, ATPase component of the type III secretion system (T3SS), also called injectisome, which is used to inject bacterial effector proteins into eukaryotic host cells. Acts as a molecular motor to provide the energy that is required for the export of proteins. Required for type III secretion apparatus (T3SA) formation, proper protein secretion, host cell invasion and virulence. May play a critical role in T3SS substrate recognition, disassembly of the effector/chaperone complex and unfolding of the effector in an ATP-dependent manner prior to secretion. This chain is Type 3 secretion system ATPase, found in Shigella flexneri.